Reading from the N-terminus, the 701-residue chain is Transcriptional regulator Kaiso (701 aa).

In terms of domain architecture, BTB spans 32 to 94 (CDVTVIVEDR…IYSSKIVRVR (63 aa)). 2 disordered regions span residues 128 to 158 (GAGG…SPLP) and 181 to 311 (SSDD…QNQH). Over residues 245 to 258 (TPSSQVQLTQNSLP) the composition is skewed to polar residues. The segment covering 259-273 (TNQQSSKNTSSTTQK) has biased composition (low complexity). Over residues 278 to 311 (VNANISKNPTPAANGFLSPTAQKQGTPNAVQNQH) the composition is skewed to polar residues. Positions 470–609 (AKLDLDGLPN…QIRQYAYVNN (140 aa)) are required for methylation dependent DNA-binding. C2H2-type zinc fingers lie at residues 501-523 (YICI…FNVH), 529-551 (YPCR…EIHH), and 557-580 (YQCL…RSVH). A required for sequence specific DNA-binding region spans residues 519–701 (HFNVHSWEKK…EFEFVIPESY (183 aa)). The disordered stretch occupies residues 644-664 (DIDPDEPQQPASEGNHANSAT). Over residues 652–664 (QPASEGNHANSAT) the composition is skewed to polar residues.

As to quaternary structure, self associates. Interacts with tcf7l1-A, leading to repression of tcf7l1-A target genes. Interacts with ctnnd1, and this interaction may inhibit DNA-binding. Interacts with ncor1.

It localises to the nucleus. Its function is as follows. Transcriptional regulator with bimodal DNA-binding specificity. Binds to methylated CpG dinucleotides in the consensus sequence 5'-CGCG-3' and also binds to the non-methylated consensus sequence 5'-CTGCNA-3'. May recruit the N-CoR repressor complex to promote histone deacetylation and the formation of repressive chromatin structures in target gene promoters. Contributes to the repression of target genes of the Wnt signaling pathway and to the methylation-dependent repression of zygotic transcription prior to the mid-blastula transition (MBT). Also required for gastrulation movements. The protein is Transcriptional regulator Kaiso (zbtb33) of Xenopus laevis (African clawed frog).